Reading from the N-terminus, the 119-residue chain is Protein TusC (119 aa).

This sequence belongs to the DsrF/TusC family. In terms of assembly, heterohexamer, formed by a dimer of trimers. The hexameric TusBCD complex contains 2 copies each of TusB, TusC and TusD. The TusBCD complex interacts with TusE.

Its subcellular location is the cytoplasm. In terms of biological role, part of a sulfur-relay system required for 2-thiolation of 5-methylaminomethyl-2-thiouridine (mnm(5)s(2)U) at tRNA wobble positions. The protein is Protein TusC of Klebsiella pneumoniae subsp. pneumoniae (strain ATCC 700721 / MGH 78578).